Reading from the N-terminus, the 113-residue chain is Guanylate cyclase activator 2B (113 aa).

The first 27 residues, 1 to 27 (MASRAAAGLLLCGVALVFLVLLQGTQS), serve as a signal peptide directing secretion. Residues 28-97 (VYIQYQGFRV…SIFQALRTIA (70 aa)) constitute a propeptide that is removed on maturation. Cystine bridges form between Cys68–Cys81, Cys101–Cys109, and Cys104–Cys112.

The protein belongs to the guanylin family.

Its subcellular location is the secreted. In terms of biological role, endogenous activator of intestinal guanylate cyclase. It stimulates this enzyme through the same receptor binding region as the heat-stable enterotoxins. May be a potent physiological regulator of intestinal fluid and electrolyte transport. May be an autocrine/paracrine regulator of intestinal salt and water transport. The chain is Guanylate cyclase activator 2B (GUCA2B) from Sus scrofa (Pig).